The primary structure comprises 399 residues: Carbamoyl phosphate synthase small chain (399 aa).

The CPSase stretch occupies residues 1–204 (MTKTTLSSDP…WNKGYTINNE (204 aa)). Positions 60, 256, and 258 each coordinate L-glutamine. The Glutamine amidotransferase type-1 domain occupies 208–396 (HIVAIDYGIK…HDLIVNYREQ (189 aa)). Residue C285 is the Nucleophile of the active site. Residues L286, Q289, N327, G329, and F330 each contribute to the L-glutamine site. Residues H369 and E371 contribute to the active site.

Belongs to the CarA family. In terms of assembly, composed of two chains; the small (or glutamine) chain promotes the hydrolysis of glutamine to ammonia, which is used by the large (or ammonia) chain to synthesize carbamoyl phosphate. Tetramer of heterodimers (alpha,beta)4.

It carries out the reaction hydrogencarbonate + L-glutamine + 2 ATP + H2O = carbamoyl phosphate + L-glutamate + 2 ADP + phosphate + 2 H(+). The catalysed reaction is L-glutamine + H2O = L-glutamate + NH4(+). The protein operates within amino-acid biosynthesis; L-arginine biosynthesis; carbamoyl phosphate from bicarbonate: step 1/1. It participates in pyrimidine metabolism; UMP biosynthesis via de novo pathway; (S)-dihydroorotate from bicarbonate: step 1/3. Functionally, small subunit of the glutamine-dependent carbamoyl phosphate synthetase (CPSase). CPSase catalyzes the formation of carbamoyl phosphate from the ammonia moiety of glutamine, carbonate, and phosphate donated by ATP, constituting the first step of 2 biosynthetic pathways, one leading to arginine and/or urea and the other to pyrimidine nucleotides. The small subunit (glutamine amidotransferase) binds and cleaves glutamine to supply the large subunit with the substrate ammonia. The protein is Carbamoyl phosphate synthase small chain of Bartonella bacilliformis (strain ATCC 35685 / KC583 / Herrer 020/F12,63).